A 57-amino-acid polypeptide reads, in one-letter code: U13-myrmicitoxin-Mri1a (57 aa).

The first 23 residues, 1-23 (MKIIHVLLLVAVVAITMSPSIMA), serve as a signal peptide directing secretion. Residues 24-29 (ESVAEA) constitute a propeptide that is removed on maturation. E56 is modified (glutamic acid 1-amide).

In terms of tissue distribution, expressed by the venom gland.

The protein resides in the secreted. Induces paralysis 1 hour after injection into insects (blowfly L.caesar) but does not appear to be lethal. This chain is U13-myrmicitoxin-Mri1a, found in Manica rubida (European giant red ant).